The following is a 212-amino-acid chain: Adenylate kinase (212 aa).

Residue 10 to 15 (GAGKGT) coordinates ATP. The NMP stretch occupies residues 30 to 59 (AIGDIFRTIIKTSTSEAELINNYVRQGELI). AMP is bound by residues Arg36, 57–59 (ELI), 85–88 (GYPR), and Gln92. An LID region spans residues 122–160 (GRYSCKNCGKIYNRYFLQPKTDNVCDVCGSSTFDYRKDD). Arg123 lines the ATP pocket. Cys126 and Cys129 together coordinate Zn(2+). Residue 132–133 (IY) participates in ATP binding. 2 residues coordinate Zn(2+): Cys146 and Cys149. AMP is bound by residues Arg157 and Arg168. Lys196 provides a ligand contact to ATP.

Belongs to the adenylate kinase family. In terms of assembly, monomer.

The protein resides in the cytoplasm. The catalysed reaction is AMP + ATP = 2 ADP. It functions in the pathway purine metabolism; AMP biosynthesis via salvage pathway; AMP from ADP: step 1/1. Catalyzes the reversible transfer of the terminal phosphate group between ATP and AMP. Plays an important role in cellular energy homeostasis and in adenine nucleotide metabolism. The chain is Adenylate kinase from Rickettsia rickettsii (strain Iowa).